The following is a 96-amino-acid chain: Dynein light chain roadblock-type 2 (96 aa).

Ala2 is subject to N-acetylalanine.

The protein belongs to the GAMAD family. Homodimer. The cytoplasmic dynein 1 complex consists of two catalytic heavy chains (HCs) and a number of non-catalytic subunits presented by intermediate chains (ICs), light intermediate chains (LICs) and light chains (LCs); the composition seems to vary in respect to the IC, LIC and LC composition. The heavy chain homodimer serves as a scaffold for the probable homodimeric assembly of the respective non-catalytic subunits. The ICs and LICs bind directly to the HC dimer and the LCs assemble on the IC dimer. Interacts with DYNC1I1 and DYNC1I2. Self-associates. Interacts with DYNLRB1. In terms of tissue distribution, high expression in heart, brain, placenta, skeletal muscle, prostate and small intestine; moderate in kidney, pancreas, spleen, testis, ovary and colon; low in lung, liver, thymus and leukocyte.

It localises to the cytoplasm. It is found in the cytoskeleton. In terms of biological role, acts as one of several non-catalytic accessory components of the cytoplasmic dynein 1 complex that are thought to be involved in linking dynein to cargos and to adapter proteins that regulate dynein function. Cytoplasmic dynein 1 acts as a motor for the intracellular retrograde motility of vesicles and organelles along microtubules. The protein is Dynein light chain roadblock-type 2 (DYNLRB2) of Homo sapiens (Human).